Consider the following 176-residue polypeptide: NAD(P)H-quinone oxidoreductase subunit J (176 aa).

The segment at 1–32 is disordered; the sequence is MEKEGLAKSSDTSIKKEGFISQSLSKDGIPNQ. Positions 20 to 32 are enriched in polar residues; that stretch reads ISQSLSKDGIPNQ.

It belongs to the complex I 30 kDa subunit family. As to quaternary structure, NDH-1 can be composed of about 15 different subunits; different subcomplexes with different compositions have been identified which probably have different functions.

Its subcellular location is the cellular thylakoid membrane. It catalyses the reaction a plastoquinone + NADH + (n+1) H(+)(in) = a plastoquinol + NAD(+) + n H(+)(out). The catalysed reaction is a plastoquinone + NADPH + (n+1) H(+)(in) = a plastoquinol + NADP(+) + n H(+)(out). NDH-1 shuttles electrons from an unknown electron donor, via FMN and iron-sulfur (Fe-S) centers, to quinones in the respiratory and/or the photosynthetic chain. The immediate electron acceptor for the enzyme in this species is believed to be plastoquinone. Couples the redox reaction to proton translocation, and thus conserves the redox energy in a proton gradient. Cyanobacterial NDH-1 also plays a role in inorganic carbon-concentration. The polypeptide is NAD(P)H-quinone oxidoreductase subunit J (Prochlorococcus marinus (strain MIT 9215)).